Here is a 475-residue protein sequence, read N- to C-terminus: Cytosolic non-specific dipeptidase (475 aa).

At Ala-2 the chain carries N-acetylalanine. Position 9 is an N6-acetyllysine (Lys-9). Ser-58 is modified (phosphoserine). His-99 contributes to the Mn(2+) binding site. Residue Asp-101 is part of the active site. A Mn(2+)-binding site is contributed by Asp-132. Catalysis depends on Glu-166, which acts as the Proton acceptor. Residues Glu-166–Glu-167, Asp-195, and His-228 each bind substrate. Mn(2+) contacts are provided by Glu-167 and Asp-195. A Phosphoserine modification is found at Ser-299. 4 residues coordinate substrate: Thr-330, Arg-343, Ser-417, and His-445. Residue His-445 participates in Mn(2+) binding.

The protein belongs to the peptidase M20A family. Homodimer. The cofactor is Mn(2+). As to expression, ubiquitously expressed with higher levels in kidney and liver (at protein level). Expressed in peripheral blood leukocytes. Expressed in gastric mucosa and down-regulated in gastric cancer mucosal tissues (at protein level). Broadly expressed in fetal tissues. Expressed in adult liver and placenta.

The protein resides in the cytoplasm. It carries out the reaction Hydrolysis of dipeptides, preferentially hydrophobic dipeptides including prolyl amino acids.. It catalyses the reaction L-threonyl-L-threonine + H2O = 2 L-threonine. The catalysed reaction is L-threonyl-L-serine + H2O = L-threonine + L-serine. The enzyme catalyses L-seryl-L-threonine + H2O = L-threonine + L-serine. It carries out the reaction L-cysteinylglycine + H2O = L-cysteine + glycine. It catalyses the reaction L-alanyl-L-cysteine + H2O = L-cysteine + L-alanine. The catalysed reaction is (S)-lactate + L-phenylalanine = N-[(S)-lactoyl]-L-phenylalanine + H2O. Inhibited by p-hydroxymercurybenzoate. The inhibitory concentration 50% (IC(50)) is 13 uM. Inhibited by bestatin. The inhibitory concentration 50% (IC(50)) is 7 nM at pH 9.5. Catalyzes the peptide bond hydrolysis in dipeptides, displaying a non-redundant activity toward threonyl dipeptides. Mediates threonyl dipeptide catabolism in a tissue-specific way. Has high dipeptidase activity toward cysteinylglycine, an intermediate metabolite in glutathione metabolism. Metabolizes N-lactoyl-amino acids, both through hydrolysis to form lactic acid and amino acids, as well as through their formation by reverse proteolysis. Plays a role in the regulation of cell cycle arrest and apoptosis. This Homo sapiens (Human) protein is Cytosolic non-specific dipeptidase.